Reading from the N-terminus, the 167-residue chain is NAD(P)H-quinone oxidoreductase subunit I, chloroplastic (167 aa).

4Fe-4S ferredoxin-type domains are found at residues 55 to 84 (GRIH…VDWK) and 95 to 124 (LNYS…MTEE). 8 residues coordinate [4Fe-4S] cluster: cysteine 64, cysteine 67, cysteine 70, cysteine 74, cysteine 104, cysteine 107, cysteine 110, and cysteine 114.

This sequence belongs to the complex I 23 kDa subunit family. In terms of assembly, NDH is composed of at least 16 different subunits, 5 of which are encoded in the nucleus. [4Fe-4S] cluster serves as cofactor.

Its subcellular location is the plastid. It is found in the chloroplast thylakoid membrane. It catalyses the reaction a plastoquinone + NADH + (n+1) H(+)(in) = a plastoquinol + NAD(+) + n H(+)(out). The enzyme catalyses a plastoquinone + NADPH + (n+1) H(+)(in) = a plastoquinol + NADP(+) + n H(+)(out). Functionally, NDH shuttles electrons from NAD(P)H:plastoquinone, via FMN and iron-sulfur (Fe-S) centers, to quinones in the photosynthetic chain and possibly in a chloroplast respiratory chain. The immediate electron acceptor for the enzyme in this species is believed to be plastoquinone. Couples the redox reaction to proton translocation, and thus conserves the redox energy in a proton gradient. The polypeptide is NAD(P)H-quinone oxidoreductase subunit I, chloroplastic (Lobularia maritima (Sweet alyssum)).